The following is a 404-amino-acid chain: Glucose-1-phosphate adenylyltransferase 2 (404 aa).

Alpha-D-glucose 1-phosphate is bound by residues Tyr97, Gly162, Glu177–Lys178, and Ser195.

The protein belongs to the bacterial/plant glucose-1-phosphate adenylyltransferase family. As to quaternary structure, homotetramer.

It catalyses the reaction alpha-D-glucose 1-phosphate + ATP + H(+) = ADP-alpha-D-glucose + diphosphate. The protein operates within glycan biosynthesis; glycogen biosynthesis. Its function is as follows. Involved in the biosynthesis of ADP-glucose, a building block required for the elongation reactions to produce glycogen. Catalyzes the reaction between ATP and alpha-D-glucose 1-phosphate (G1P) to produce pyrophosphate and ADP-Glc. This chain is Glucose-1-phosphate adenylyltransferase 2, found in Vibrio vulnificus (strain CMCP6).